We begin with the raw amino-acid sequence, 89 residues long: UPF0473 protein Helmi_02360 (89 aa).

The protein belongs to the UPF0473 family.

The sequence is that of UPF0473 protein Helmi_02360 from Heliobacterium modesticaldum (strain ATCC 51547 / Ice1).